A 476-amino-acid polypeptide reads, in one-letter code: Adenosylhomocysteinase (476 aa).

Substrate is bound by residues threonine 67, aspartate 142, and glutamate 202. Residue threonine 203 to threonine 205 participates in NAD(+) binding. Substrate is bound by residues lysine 232 and aspartate 236. NAD(+) is bound by residues asparagine 237, glycine 266 to glycine 271, glutamate 289, asparagine 324, isoleucine 345 to histidine 347, and asparagine 390.

The protein belongs to the adenosylhomocysteinase family. It depends on NAD(+) as a cofactor.

The protein resides in the cytoplasm. It carries out the reaction S-adenosyl-L-homocysteine + H2O = L-homocysteine + adenosine. It functions in the pathway amino-acid biosynthesis; L-homocysteine biosynthesis; L-homocysteine from S-adenosyl-L-homocysteine: step 1/1. May play a key role in the regulation of the intracellular concentration of adenosylhomocysteine. This chain is Adenosylhomocysteinase, found in Parasynechococcus marenigrum (strain WH8102).